Consider the following 287-residue polypeptide: Bifunctional protein FolD (287 aa).

NADP(+) is bound by residues 165–167 (GRG), T190, and I231.

Belongs to the tetrahydrofolate dehydrogenase/cyclohydrolase family. As to quaternary structure, homodimer.

The catalysed reaction is (6R)-5,10-methylene-5,6,7,8-tetrahydrofolate + NADP(+) = (6R)-5,10-methenyltetrahydrofolate + NADPH. It carries out the reaction (6R)-5,10-methenyltetrahydrofolate + H2O = (6R)-10-formyltetrahydrofolate + H(+). It functions in the pathway one-carbon metabolism; tetrahydrofolate interconversion. Catalyzes the oxidation of 5,10-methylenetetrahydrofolate to 5,10-methenyltetrahydrofolate and then the hydrolysis of 5,10-methenyltetrahydrofolate to 10-formyltetrahydrofolate. The sequence is that of Bifunctional protein FolD from Heliobacterium modesticaldum (strain ATCC 51547 / Ice1).